The primary structure comprises 2440 residues: Nuclear receptor corepressor 1 (2440 aa).

The span at 1–18 (MSSSGYPPNQGAFSTEQS) shows a compositional bias: polar residues. 2 disordered regions span residues 1–177 (MSSS…SKLS) and 206–231 (QQQL…VEQK). Residues 1–373 (MSSSGYPPNQ…QRGAGLSATI (373 aa)) are interaction with ZBTB33 and HEXIM1. Over residues 51–64 (SQASQLLQQQQQQQ) the composition is skewed to low complexity. Composition is skewed to basic and acidic residues over residues 77–88 (PGSDRPQERRTS), 99–119 (VDHD…DSHF), and 141–155 (ADAK…KHEA). At S172 the chain carries Phosphoserine. Residues 174–216 (SKLSKEELIQSMDRVDREIAKVEQQILKLKKKQQQLEEEAAKP) adopt a coiled-coil conformation. A compositionally biased stretch (basic and acidic residues) spans 212 to 221 (EAAKPPEPEK). At S224 the chain carries Phosphoserine. An interaction with SIN3A/B region spans residues 254–312 (FEGLGPKVELPLYNQPSDTKVYHENIKTNQVMRKKLILFFKRRNHARKQREQKICQRYD). Residues 299-328 (ARKQREQKICQRYDQLMEAWEKKVDRIENN) adopt a coiled-coil conformation. One can recognise an SANT 1 domain in the interval 435 to 486 (QFMNVWTDHEKEIFKDKFIQHPKNFGLIASYLERKSVPDCVLYYYLTKKNEN). Disordered regions lie at residues 497–632 (KRRG…TEEE) and 677–915 (NLLQ…GSIL). A coiled-coil region spans residues 501–557 (RNQQIARPSQEEKVEEKEEDKAEKTEKKEEEKKDEEEKDEKEDSKENTKEKDKIDGT). Composition is skewed to basic and acidic residues over residues 509-531 (SQEE…KEEE) and 541-556 (KEDS…KIDG). The span at 592–605 (EAAAASAAAAAATE) shows a compositional bias: low complexity. The segment covering 606–617 (EPPPPLPPPPEP) has biased composition (pro residues). Residues 623-674 (VETSRWTEEEMEVAKKGLVEHGRNWAAIAKMVGTKSEAQCKNFYFNYKRRHN) form the SANT 2 domain. Polar residues predominate over residues 698-708 (QCESVASTVSA). The span at 709-728 (QEDEDIEASNEEENPEDSEV) shows a compositional bias: acidic residues. Over residues 752–768 (ELEPTTETAPSTSPSLA) the composition is skewed to low complexity. Over residues 781–792 (ETQVNDSISAET) the composition is skewed to polar residues. Residues 820-859 (DSVDVEVRVPENHASKVEGDNTKERDLDRASEKVEPRDED) show a composition bias toward basic and acidic residues. Polar residues-rich tracts occupy residues 864–883 (QQIN…SATC) and 906–915 (SLLNPTGSIL). The interval 988 to 1816 (RSSTSPCGTS…QGLPASRYNT (829 aa)) is interaction with ETO. S999 is subject to Phosphoserine. The segment at 1022-1046 (VRLPTTRPTRPPPPLIPSSKTTVAS) is disordered. K1106 is covalently cross-linked (Glycyl lysine isopeptide (Lys-Gly) (interchain with G-Cter in SUMO1); alternate). A Glycyl lysine isopeptide (Lys-Gly) (interchain with G-Cter in SUMO2); alternate cross-link involves residue K1106. S1111 bears the Phosphoserine mark. K1184 is covalently cross-linked (Glycyl lysine isopeptide (Lys-Gly) (interchain with G-Cter in SUMO2)). Residues 1184-1204 (KGSISRMPIEDSSPEKGREEA) are disordered. Residues S1195, S1196, S1249, S1263, S1281, and S1322 each carry the phosphoserine modification. K1336 carries the N6-acetyllysine modification. T1367 is modified (phosphothreonine). Residue K1389 forms a Glycyl lysine isopeptide (Lys-Gly) (interchain with G-Cter in SUMO2) linkage. K1412 participates in a covalent cross-link: Glycyl lysine isopeptide (Lys-Gly) (interchain with G-Cter in SUMO2); alternate. At K1412 the chain carries N6-acetyllysine; alternate. Residues 1440–1459 (AGETVRSRHTSVVSSGPSVL) are disordered. A phosphoserine mark is found at S1450 and S1472. Positions 1488 to 1512 (YQNTMSRGSPMMNRTSDVTISSNKS) are enriched in polar residues. The segment at 1488-1554 (YQNTMSRGSP…SPFDPHHRGS (67 aa)) is disordered. The interval 1501–2440 (RTSDVTISSN…QYETLSDSDD (940 aa)) is interaction with C1D. A Glycyl lysine isopeptide (Lys-Gly) (interchain with G-Cter in SUMO2) cross-link involves residue K1518. Phosphoserine is present on S1592. Disordered regions lie at residues 1690-1759 (PRPY…SPSP) and 1884-1922 (SSAF…LRTR). Composition is skewed to basic and acidic residues over residues 1712–1729 (AERE…RERI) and 1903–1921 (AGKD…ELRT). Residues 1933 to 1937 (IDVII) carry the CORNR box 1 motif. The tract at residues 1943–1969 (SDKDARERGSQSSDSSSSLSSHRYETP) is disordered. The segment covering 1952-1963 (SQSSDSSSSLSS) has biased composition (low complexity). Residues S1977 and S1981 each carry the phosphoserine modification. The tract at residues 2006 to 2041 (PTRQYEGPLHHYRPQQESPSPQQQLPPSSQAEGMGQ) is disordered. Positions 2020 to 2035 (QQESPSPQQQLPPSSQ) are enriched in low complexity. Residues 2032–2115 (PSSQAEGMGQ…QAQSVHHQRP (84 aa)) are ID1. Residues 2047 to 2050 (RLIT) are required for interaction with RARA in the absence of its ligand. A CORNR box 2 motif is present at residues 2055–2059 (ICQII). Over residues 2067–2086 (QVSSQTPQQPPTSTFQNSPS) the composition is skewed to low complexity. Positions 2067-2155 (QVSSQTPQQP…PYEPISPPQV (89 aa)) are disordered. Residues 2087-2110 (ALVSTPVRTKTSNRYSPESQAQSV) show a composition bias toward polar residues. S2102, S2120, S2136, S2151, and S2184 each carry phosphoserine. Residues 2124 to 2142 (LVDKSRGSRPGKSPERSHV) are compositionally biased toward basic and acidic residues. Residues 2212–2273 (IFRKLNSSGG…EDIIRKALMG (62 aa)) form an ID2 region. The CORNR box 3 signature appears at 2263–2267 (LEDII). The segment at 2287–2440 (SQPMGVVPGT…QYETLSDSDD (154 aa)) is disordered. A compositionally biased stretch (polar residues) spans 2296 to 2305 (TANTSVVTSG). T2399 carries the post-translational modification Phosphothreonine. 2 stretches are compositionally biased toward polar residues: residues 2407–2418 (AVNQAAPHQQNR) and 2431–2440 (QYETLSDSDD). 2 positions are modified to phosphoserine: S2436 and S2438.

This sequence belongs to the N-CoR nuclear receptor corepressors family. Forms a large corepressor complex that contains SIN3A/B and histone deacetylases HDAC1 and HDAC2. This complex associates with the thyroid receptor (TR) and the retinoid acid receptor (RAR) in the absence of ligand. Interacts directly with RARA; the interaction is facilitated with RARA trimethylation. Component of the N-Cor repressor complex, at least composed of CBFA2T3, HEXIM1, NCOR1, NCOR2, HDAC3, TBL1X, TBL1XR1, CORO2A and GPS2. Interacts with ZBTB33; the interaction serves to recruit the N-CoR complex to promoter regions containing methylated CpG dinucleotides. Interacts with TRIM28 and KDM3A. Interacts (via the RD1 domain) with BAZ1A (via its N-terminal); the interaction corepresses a number of NCOR1-regulated genes. Interacts with BCL6, C1D, DACH1, HEXIM1, HDAC7, RORA, RORC, SAP30, SIAH2, SIN3A and SIN3B. May interact with DEAF1. Interacts with RXRA. Interacts with SETD5. Interacts with VDR. Interacts with ZBTB7A. Interacts with AR. Interacts with HDAC3. Post-translationally, ubiquitinated; mediated by SIAH2 and leading to its subsequent proteasomal degradation.

It is found in the nucleus. Functionally, mediates transcriptional repression by certain nuclear receptors. Part of a complex which promotes histone deacetylation and the formation of repressive chromatin structures which may impede the access of basal transcription factors. Participates in the transcriptional repressor activity produced by BCL6. Recruited by ZBTB7A to the androgen response elements/ARE on target genes, negatively regulates androgen receptor signaling and androgen-induced cell proliferation. Mediates the NR1D1-dependent repression and circadian regulation of TSHB expression. The NCOR1-HDAC3 complex regulates the circadian expression of the core clock gene ARTNL/BMAL1 and the genes involved in lipid metabolism in the liver. This is Nuclear receptor corepressor 1 (NCOR1) from Homo sapiens (Human).